A 387-amino-acid polypeptide reads, in one-letter code: Succinate--CoA ligase [ADP-forming] subunit beta (387 aa).

An ATP-grasp domain is found at 9-244 (KQLFASYGLP…VSQEDDRENR (236 aa)). ATP-binding positions include Lys-46, 53–55 (GRG), Glu-99, Cys-102, and Glu-107. Mg(2+) is bound by residues Asn-199 and Asp-213. Substrate is bound by residues Asn-264 and 321-323 (GIV).

Belongs to the succinate/malate CoA ligase beta subunit family. In terms of assembly, heterotetramer of two alpha and two beta subunits. Mg(2+) serves as cofactor.

It catalyses the reaction succinate + ATP + CoA = succinyl-CoA + ADP + phosphate. The enzyme catalyses GTP + succinate + CoA = succinyl-CoA + GDP + phosphate. It participates in carbohydrate metabolism; tricarboxylic acid cycle; succinate from succinyl-CoA (ligase route): step 1/1. Its function is as follows. Succinyl-CoA synthetase functions in the citric acid cycle (TCA), coupling the hydrolysis of succinyl-CoA to the synthesis of either ATP or GTP and thus represents the only step of substrate-level phosphorylation in the TCA. The beta subunit provides nucleotide specificity of the enzyme and binds the substrate succinate, while the binding sites for coenzyme A and phosphate are found in the alpha subunit. The polypeptide is Succinate--CoA ligase [ADP-forming] subunit beta (Legionella pneumophila (strain Corby)).